The sequence spans 171 residues: ATP synthase subunit b (171 aa).

A helical membrane pass occupies residues 2 to 22 (FVVKMVLGFLILLSPLCATGL).

This sequence belongs to the ATPase B chain family. As to quaternary structure, F-type ATPases have 2 components, F(1) - the catalytic core - and F(0) - the membrane proton channel. F(1) has five subunits: alpha(3), beta(3), gamma(1), delta(1), epsilon(1). F(0) has three main subunits: a(1), b(2) and c(10-14). The alpha and beta chains form an alternating ring which encloses part of the gamma chain. F(1) is attached to F(0) by a central stalk formed by the gamma and epsilon chains, while a peripheral stalk is formed by the delta and b chains.

The protein localises to the cell inner membrane. In terms of biological role, f(1)F(0) ATP synthase produces ATP from ADP in the presence of a proton or sodium gradient. F-type ATPases consist of two structural domains, F(1) containing the extramembraneous catalytic core and F(0) containing the membrane proton channel, linked together by a central stalk and a peripheral stalk. During catalysis, ATP synthesis in the catalytic domain of F(1) is coupled via a rotary mechanism of the central stalk subunits to proton translocation. Functionally, component of the F(0) channel, it forms part of the peripheral stalk, linking F(1) to F(0). This chain is ATP synthase subunit b, found in Helicobacter pylori (strain G27).